Consider the following 2877-residue polypeptide: Desmoplakin (2877 aa).

A disordered region spans residues 1 to 20; that stretch reads MSCNGGSHPRINTLGRMTRA. The interaction with PKP1, JUP, PKP2 stretch occupies residues 1–591; sequence MSCNGGSHPR…DYMKTIEDLE (591 aa). The interval 1 to 1063 is globular 1; that stretch reads MSCNGGSHPR…ANSENCNKNK (1063 aa). Residues Ser-22 and Ser-62 each carry the phosphoserine modification. Position 65 is a phosphotyrosine (Tyr-65). Thr-70 carries the phosphothreonine modification. Phosphoserine occurs at positions 174, 175, and 183. 2 Spectrin repeats span residues 185–278 and 279–382; these read SGWD…HLRQ and LQNI…LKEN. The Spectrin 3a repeat unit spans residues 383–453; it reads AAYFQFFEEA…NLVNKSKKIV (71 aa). The 58-residue stretch at 465 to 522 folds into the SH3 domain; it reads NKPIILRALCDYKQDQKIVHKGDECILKDNNERSKWYVTGPGGVDMLVPSVGLIIPPP. Residues 523 to 552 form a Spectrin 3b repeat; that stretch reads NPLAVDLSCKIEQYYEAILALWNQLYINMK. Spectrin repeat units follow at residues 553-634, 661-776, and 777-890; these read SLVS…IQLP, VIET…SLCS, and VRAL…DLEK. Coiled coils occupy residues 1034–1280, 1313–1354, 1395–1443, and 1473–1926; these read LKLK…AEEN, NARH…YENE, TSGY…QKAS, and KQSL…KLED. The segment at 1064–1952 is central fibrous rod domain; the sequence is FLDQNLQKYQ…QKEIDKLRQR (889 aa). A phosphoserine mark is found at Ser-1665, Ser-1715, and Ser-2031. A globular 2 region spans residues 1953 to 2877; that stretch reads PYGSHRETQT…YSFSSSSIGY (925 aa). Positions 1967–2215 are 4.5 X 38 AA tandem repeats (Domain A); sequence TVDSSKLVFD…LLLSVQKRSM (249 aa). 17 Plectin repeats span residues 2016–2052, 2053–2090, 2091–2128, 2129–2166, 2170–2204, 2205–2240, 2258–2295, 2296–2333, 2334–2371, 2372–2409, 2413–2447, 2463–2500, 2514–2551, 2617–2654, 2655–2692, 2731–2768, and 2769–2806; these read QPFL…PEST, VMLL…FDDR, QQIY…RETG, MRLL…RDLY, NDPR…PHTG, LLLL…PSTV, KDFL…PGTA, LELL…IEFK, EKLL…KGHG, IRLL…EELS, SDPS…EETG, SQKN…YETF, TITG…RKFF, SDPL…SITG, QRLL…QDMA, QRFL…GRAA, and QRLQ…DITG. Residues Ser-2214, Ser-2216, and Ser-2232 each carry the phosphoserine modification. The interval 2251-2453 is 4.5 X 38 AA tandem repeats (Domain B); it reads DEVGERIKDF…EETGLCLLPL (203 aa). Residues 2603–2628 form an LRR 15 repeat; sequence ISSVRNLTIRSSSLSDPLEESSPIAA. Residues 2616–2828 are 4.5 X 38 AA tandem repeats (Domain C); the sequence is LSDPLEESSP…GLPSPYNMSA (213 aa). A phosphoserine mark is found at Ser-2817 and Ser-2822. The disordered stretch occupies residues 2817–2877; the sequence is SKGLPSPYNM…YSFSSSSIGY (61 aa). Residue Tyr-2824 is modified to Phosphotyrosine. Residues Ser-2827 and Ser-2831 each carry the phosphoserine modification. Residues 2830–2853 are 6 X 4 AA tandem repeats of G-S-R-[SR]; it reads GSRSGSRSGSRSGSRSGSRSGSRR. Low complexity predominate over residues 2830–2853; that stretch reads GSRSGSRSGSRSGSRSGSRSGSRR. 2 positions are modified to omega-N-methylarginine: Arg-2832 and Arg-2853. Ser-2855 is subject to Phosphoserine. Position 2859 is a phosphothreonine (Thr-2859). Positions 2862–2877 are enriched in low complexity; that stretch reads SSYSYSYSFSSSSIGY. Ser-2874 carries the phosphoserine modification.

The protein belongs to the plakin or cytolinker family. As to quaternary structure, homodimer. Interacts with COL17A1 (via cytoplasmic region). Interacts with DSC2. Interacts with PKP1. Interacts with PKP2. Interacts weakly with TMEM65. Phosphorylation at Ser-2855 increases association with intermediate filament cytokeratin, potentially facilitating interaction between desmosome junctions and intermediate filament architecture. In terms of tissue distribution, expressed in cardiomyocytes (at protein level).

It is found in the cell junction. Its subcellular location is the desmosome. The protein resides in the cell membrane. The protein localises to the cytoplasm. In terms of biological role, major high molecular weight protein of desmosomes. Regulates profibrotic gene expression in cardiomyocytes via activation of the MAPK14/p38 MAPK signaling cascade and increase in TGFB1 protein abundance. The sequence is that of Desmoplakin from Rattus norvegicus (Rat).